A 457-amino-acid chain; its full sequence is Charged multivesicular body protein 7 (457 aa).

2 coiled-coil regions span residues 234–266 and 331–382; these read QLQC…LLKE and TVER…EKSV. Disordered regions lie at residues 381–401 and 435–457; these read SVPE…PPRK and LTVS…EPAQ.

Belongs to the SNF7 family.

It is found in the cytoplasm. The protein localises to the nucleus envelope. Functionally, ESCRT-III-like protein required to recruit the ESCRT-III complex to the nuclear envelope during late anaphase. Together with SPAST, the ESCRT-III complex promotes nuclear envelope sealing and mitotic spindle disassembly during late anaphase. Plays a role in the endosomal sorting pathway. The polypeptide is Charged multivesicular body protein 7 (chmp7) (Danio rerio (Zebrafish)).